The following is a 190-amino-acid chain: Somatotropin (190 aa).

H19 contacts Zn(2+). The cysteines at positions 52 and 163 are disulfide-linked. E172 is a Zn(2+) binding site. A disulfide bridge connects residues C180 and C188.

It belongs to the somatotropin/prolactin family.

The protein localises to the secreted. Growth hormone plays an important role in growth control and involved in the regulation of several anabolic processes. The sequence is that of Somatotropin (GH) from Crocodylus novaeguineae (Crocodile).